The following is a 123-amino-acid chain: Small ribosomal subunit protein uS12cz/uS12cy (123 aa).

This sequence belongs to the universal ribosomal protein uS12 family. In terms of assembly, part of the 30S ribosomal subunit.

The protein resides in the plastid. Its subcellular location is the chloroplast. Its function is as follows. With S4 and S5 plays an important role in translational accuracy. Located at the interface of the 30S and 50S subunits. In Angiopteris evecta (Mule's foot fern), this protein is Small ribosomal subunit protein uS12cz/uS12cy (rps12-A).